The following is a 583-amino-acid chain: Nuclear hormone receptor family member nhr-31 (583 aa).

Positions 43–77 (DLRTSGATSSSGPATSYIIRPSDKQPTVSSGGSQN) are disordered. Residues 46-58 (TSGATSSSGPATS) show a composition bias toward low complexity. Residues 66-77 (KQPTVSSGGSQN) show a composition bias toward polar residues. The nuclear receptor DNA-binding region spans 79 to 154 (DSVCAVCGDG…AGMDPKAVRP (76 aa)). NR C4-type zinc fingers lie at residues 82-102 (CAVCGDGIAKLHYGVLACYGC) and 118-142 (CRFSNNCIVDKFQRNSCRYCRFQRC). The NR LBD domain maps to 195 to 464 (ETRILLMQLM…DNLLAEMFGD (270 aa)).

Belongs to the nuclear hormone receptor family.

It is found in the nucleus. Orphan nuclear receptor. The polypeptide is Nuclear hormone receptor family member nhr-31 (nhr-31) (Caenorhabditis elegans).